Reading from the N-terminus, the 193-residue chain is dCTP deaminase (193 aa).

DCTP is bound by residues 110-115 (RSSLAR), D128, 136-138 (VLE), Y171, K178, and Q182. E138 (proton donor/acceptor) is an active-site residue. The segment at 169 to 193 (RPYNRRQDAKYRDQQGAVASRIDKD) is disordered.

It belongs to the dCTP deaminase family. As to quaternary structure, homotrimer.

It catalyses the reaction dCTP + H2O + H(+) = dUTP + NH4(+). Its pathway is pyrimidine metabolism; dUMP biosynthesis; dUMP from dCTP (dUTP route): step 1/2. In terms of biological role, catalyzes the deamination of dCTP to dUTP. This chain is dCTP deaminase, found in Citrobacter koseri (strain ATCC BAA-895 / CDC 4225-83 / SGSC4696).